We begin with the raw amino-acid sequence, 475 residues long: MAAPRPPPGRLSGVMMPAPIQDLEALRALTALFKEQRNRDTAPRTIFQRVLDILKKSSHAVELACRDPSQVEHLASSLQLITECFRCLRNACIECSVNQNSIRNLGTIGVAVDLILLFRELRVEQDSLLTAFRCGLQFLGNIASRNEDSQSVVWMHAFPELFLSCLNHPDRKIVAYSSMILFTSLNSERMKELEENLNIAIDVVEAHQKQPESEWPFLIITDHFLKSPELVKAMYAKMSNQERVTLLDLMIAKIVGDEPLTKDDAPVFLSHAELIASTFVDQCKIVLKLTSEQHTDDEEALATIRLLDVLCEKTANTDLLGYLQVFPGLLERVIDLLRLIHVAGNDSTNIFSACASIKADGDVSSVAEGFKSHLIRLIGNLCYKNKDNQDKVNELDGIPLILDSCGLDDSNPFLTQWVVYAIRNLTEDNSQNQDLIAKMEEQGLADASLLKKMGFEVEKRGDKLILKSTSDTPQL.

At R10 the chain carries Omega-N-methylarginine. 2 positions are modified to phosphoserine: S12 and S77. Position 82 is a phosphothreonine (T82). S430 is subject to Phosphoserine.

The protein belongs to the ataxin-10 family. As to quaternary structure, homooligomer. Interacts with GNB2. Interacts with IQCB1. Interacts with OGT. In terms of processing, polyubiquitinated. Post-translationally, phosphorylation at Ser-12 by AURKB promotes the association of ATXN10 with PLK1. Phosphorylation at Ser-77 and Thr-82 by PLK1 may play a role in the regulation of cytokinesis and may stimulate the proteasome-mediated degradation of ATXN10.

Its subcellular location is the cytoplasm. The protein localises to the perinuclear region. It localises to the cytoskeleton. It is found in the cilium basal body. The protein resides in the microtubule organizing center. Its subcellular location is the centrosome. The protein localises to the centriole. It localises to the midbody. Functionally, may play a role in the regulation of cytokinesis. May play a role in signaling by stimulating protein glycosylation. Induces neuritogenesis by activating the Ras-MAP kinase pathway and is necessary for the survival of cerebellar neurons. Does not appear to play a major role in ciliogenesis. The sequence is that of Ataxin-10 (ATXN10) from Bos taurus (Bovine).